A 275-amino-acid polypeptide reads, in one-letter code: Centromere protein V (275 aa).

2 stretches are compositionally biased toward low complexity: residues 1 to 10 (MRRSRSSAAA) and 17 to 51 (RSGA…QAGS). The tract at residues 1–109 (MRRSRSSAAA…ATPTSSASNL (109 aa)) is disordered. Residues serine 18 and serine 21 each carry the phosphoserine modification. Arginine 43 carries the omega-N-methylarginine modification. The span at 79 to 100 (GEPPPPELALLPPPPPPPPTPA) shows a compositional bias: pro residues. Residues threonine 98, threonine 101, and threonine 103 each carry the phosphothreonine modification. The 113-residue stretch at 148–260 (HTGGCHCGAV…TEEFNGSDWE (113 aa)) folds into the CENP-V/GFA domain. Cysteine 152, cysteine 154, cysteine 172, cysteine 174, cysteine 177, cysteine 216, and cysteine 219 together coordinate Zn(2+). Serine 257 bears the Phosphoserine mark.

This sequence belongs to the Gfa family. Zn(2+) is required as a cofactor.

It is found in the chromosome. Its subcellular location is the centromere. The protein resides in the kinetochore. It localises to the nucleus. The protein localises to the cytoplasm. It is found in the cytoskeleton. Its subcellular location is the spindle. Required for distribution of pericentromeric heterochromatin in interphase nuclei and for centromere formation and organization, chromosome alignment and cytokinesis. The sequence is that of Centromere protein V (CENPV) from Homo sapiens (Human).